Consider the following 149-residue polypeptide: Limonene-1,2-epoxide hydrolase (149 aa).

D101 serves as the catalytic Proton donor. Catalysis depends on D132, which acts as the Proton acceptor.

It belongs to the limonene-1,2-epoxide hydrolase family. As to quaternary structure, monomer.

The catalysed reaction is limonene 1,2-epoxide + H2O = limonene-1,2-diol. It functions in the pathway terpene metabolism; (4R)-limonene degradation; (1S,4R)-1-hydroxylimonen-2-one from (4R)-limonene: step 2/3. Functionally, catalyzes the conversion of limonene-1,2-epoxide to limonene-1,2-diol. Can use both the (-) and (+) isomers of limonene-1,2-epoxide as substrates and also has some activity with 1-methylcyclohexene oxide, cyclohexene oxide and indene oxide as substrates. This Rhodococcus erythropolis (Arthrobacter picolinophilus) protein is Limonene-1,2-epoxide hydrolase (limA).